The following is a 355-amino-acid chain: Peptide chain release factor 1 (355 aa).

Glutamine 232 is subject to N5-methylglutamine.

This sequence belongs to the prokaryotic/mitochondrial release factor family. Post-translationally, methylated by PrmC. Methylation increases the termination efficiency of RF1.

The protein localises to the cytoplasm. Its function is as follows. Peptide chain release factor 1 directs the termination of translation in response to the peptide chain termination codons UAG and UAA. This is Peptide chain release factor 1 from Thermobifida fusca (strain YX).